We begin with the raw amino-acid sequence, 331 residues long: UAP56-interacting factor (331 aa).

Positions 16-34 match the UAP56-binding motif motif; that stretch reads APDKVDMSLDDIIRLNKKE. 3 disordered regions span residues 30-51, 63-99, and 158-193; these read LNKK…LQKG, RARG…RRRG, and GQRR…TQRE. Polar residues predominate over residues 166–175; the sequence is TDIQRGLNST.

This sequence belongs to the UIF family.

It localises to the nucleus. The protein resides in the nucleoplasm. The protein localises to the nucleus speckle. Functionally, required for mRNA export from the nucleus to the cytoplasm. Acts as an adapter that uses the ddx39b/uap56-nfx1 pathway to ensure efficient mRNA export and delivering to the nuclear pore. The sequence is that of UAP56-interacting factor (fyttd1) from Salmo salar (Atlantic salmon).